A 66-amino-acid chain; its full sequence is Phylloseptin-Az2 (66 aa).

The signal sequence occupies residues 1-22 (MAFLKKSLFLVLFLGLVSLSIC). Positions 23–44 (EEEKRETEEKENEQEDDDKSEE) are excised as a propeptide. Residues 24–45 (EEKRETEEKENEQEDDDKSEEK) are disordered. A compositionally biased stretch (acidic residues) spans 31–41 (EKENEQEDDDK). At Phe-65 the chain carries Phenylalanine amide.

In terms of tissue distribution, expressed by the skin glands.

It is found in the secreted. Its function is as follows. Has antibacterial activity against the Gram-negative bacteria E.coli ATCC 11775 (MIC=7.2 uM), and the Gram-positive bacteria S.aureus ATCC 12600 (MIC=3.6 uM) and M.luteus ATCC 49732 (MIC=1.8 uM). Does not inhibit the growth of the fungus C.albicans. The protein is Phylloseptin-Az2 of Pithecopus azureus (Orange-legged monkey tree frog).